A 577-amino-acid chain; its full sequence is Proline--tRNA ligase (577 aa).

It belongs to the class-II aminoacyl-tRNA synthetase family. ProS type 1 subfamily. As to quaternary structure, homodimer.

Its subcellular location is the cytoplasm. The catalysed reaction is tRNA(Pro) + L-proline + ATP = L-prolyl-tRNA(Pro) + AMP + diphosphate. Its function is as follows. Catalyzes the attachment of proline to tRNA(Pro) in a two-step reaction: proline is first activated by ATP to form Pro-AMP and then transferred to the acceptor end of tRNA(Pro). As ProRS can inadvertently accommodate and process non-cognate amino acids such as alanine and cysteine, to avoid such errors it has two additional distinct editing activities against alanine. One activity is designated as 'pretransfer' editing and involves the tRNA(Pro)-independent hydrolysis of activated Ala-AMP. The other activity is designated 'posttransfer' editing and involves deacylation of mischarged Ala-tRNA(Pro). The misacylated Cys-tRNA(Pro) is not edited by ProRS. This is Proline--tRNA ligase from Chlamydia felis (strain Fe/C-56) (Chlamydophila felis).